The sequence spans 213 residues: Large ribosomal subunit protein uL1 (213 aa).

This sequence belongs to the universal ribosomal protein uL1 family. As to quaternary structure, part of the 50S ribosomal subunit.

In terms of biological role, probably involved in E site tRNA release. Binds directly to 23S rRNA. Its function is as follows. Protein L1 is also a translational repressor protein, it controls the translation of the L1 operon by binding to its mRNA. Thus it also controls transcription of L10 and L12 by translational coupling. Unlike the case in E.coli, where the site is in the untranslated mRNA leader, this site is within the L1 protein's structural gene. The protein is Large ribosomal subunit protein uL1 of Methanococcus vannielii (strain ATCC 35089 / DSM 1224 / JCM 13029 / OCM 148 / SB).